The primary structure comprises 894 residues: Microsomal triglyceride transfer protein large subunit (894 aa).

A signal peptide spans 1-21 (MILLAVLFLCFFSSYSASVKG). The region spanning 28 to 658 (LNNERLYKLT…IFQYIGKAEL (631 aa)) is the Vitellogenin domain. Residues C174 and C194 are joined by a disulfide bond.

Interacts with PRAP1. In terms of assembly, heterodimer; heterodimerizes with the protein disulfide isomerase (P4HB/PDI). Interacts with APOB. As to quaternary structure, heterodimer; heterodimerizes with the protein disulfide isomerase (P4HB/PDI). Post-translationally, cleaved by signal peptidase between residues Gln-33 and Asn-34. In terms of tissue distribution, mainly expressed in the intestine and the liver, and at lower levels in white and brown fat cells. Expressed in heart. Ubiquitous, and is the major isoform in hematopoietic cells and adipocytes.

It is found in the endoplasmic reticulum. It localises to the golgi apparatus. It catalyses the reaction a 1,2-diacyl-sn-glycero-3-phosphocholine(in) = a 1,2-diacyl-sn-glycero-3-phosphocholine(out). It carries out the reaction a 1,2-diacyl-sn-glycero-3-phosphoethanolamine(in) = a 1,2-diacyl-sn-glycero-3-phosphoethanolamine(out). The enzyme catalyses a cholesterol ester(in) = a cholesterol ester(out). The catalysed reaction is a triacyl-sn-glycerol(in) = a triacyl-sn-glycerol(out). Catalyzes the transport of triglyceride, cholesteryl ester, and phospholipid between phospholipid surfaces. Required for the assembly and secretion of plasma lipoproteins that contain apolipoprotein B. May be involved in regulating cholesteryl ester biosynthesis in cells that produce lipoproteins. Its function is as follows. Critical for the development of natural killer T (NKT) cells. Required for the assembly and secretion of plasma lipoproteins that contain apolipoprotein B. The chain is Microsomal triglyceride transfer protein large subunit (Mttp) from Mus musculus (Mouse).